A 565-amino-acid polypeptide reads, in one-letter code: Urease subunit beta (565 aa).

A Urease domain is found at 130–565 (GGIDTHIHFI…LALARKYFMI (436 aa)). Ni(2+) is bound by residues histidine 135, histidine 137, and lysine 218. The residue at position 218 (lysine 218) is an N6-carboxylysine. Residue histidine 220 participates in substrate binding. Ni(2+) is bound by residues histidine 247 and histidine 273. Histidine 321 functions as the Proton donor in the catalytic mechanism. Residue aspartate 361 coordinates Ni(2+).

Belongs to the metallo-dependent hydrolases superfamily. Urease alpha subunit family. Heterohexamer of 3 UreA (alpha) and 3 UreB (beta) subunits. Ni cation is required as a cofactor. Carboxylation allows a single lysine to coordinate two nickel ions.

Its subcellular location is the cytoplasm. The enzyme catalyses urea + 2 H2O + H(+) = hydrogencarbonate + 2 NH4(+). It participates in nitrogen metabolism; urea degradation; CO(2) and NH(3) from urea (urease route): step 1/1. The chain is Urease subunit beta from Campylobacter lari.